The primary structure comprises 259 residues: UPF0246 protein PA14_18590 (259 aa).

This sequence belongs to the UPF0246 family.

This chain is UPF0246 protein PA14_18590, found in Pseudomonas aeruginosa (strain UCBPP-PA14).